Consider the following 416-residue polypeptide: Catalase-peroxidase 2 (416 aa).

The first 20 residues, 1–20 (MLLPLIVFLLSVLIHHRIYS), serve as a signal peptide directing secretion.

The protein belongs to the peroxidase family. Peroxidase/catalase subfamily. As to quaternary structure, homodimer or homotetramer. The cofactor is heme b. Post-translationally, formation of the three residue Trp-Tyr-Met cross-link is important for the catalase, but not the peroxidase activity of the enzyme.

The catalysed reaction is H2O2 + AH2 = A + 2 H2O. It catalyses the reaction 2 H2O2 = O2 + 2 H2O. Bifunctional enzyme with both catalase and broad-spectrum peroxidase activity. The polypeptide is Catalase-peroxidase 2 (katG2) (Alkaliphilus metalliredigens (strain QYMF)).